We begin with the raw amino-acid sequence, 1411 residues long: Protein three rows (1411 aa).

The interval 1065-1071 (VEPIRKQ) is separase cleavage-site. Disordered regions lie at residues 1221 to 1240 (LEPP…NISP), 1268 to 1301 (VRPA…KSPK), and 1330 to 1411 (AKST…RHRN). Low complexity-rich tracts occupy residues 1270 to 1289 (PASS…NASS) and 1386 to 1398 (TAEQ…TATP).

In terms of assembly, interacts with pim and Sse. Cleavage of thr contributes to inactivation of Sse.

It is found in the cytoplasm. Functionally, required specifically for chromosome disjunction during all mitoses; maternally provided protein is sufficient until mitosis 14 then zygotic protein is required. Involved in formation and/or maintenance of epithelial structures: bud extension during Malpighian tubule development, and foregut and hindgut morphogenesis. The chain is Protein three rows (thr) from Drosophila virilis (Fruit fly).